A 715-amino-acid polypeptide reads, in one-letter code: MVQKYQSPVRVYKYPFELIMAAYERRFPTCPLIPMFVGSDTVNEFKSEDGAIHVIERRCKLDVDAPRLLKKIAGVDYVYFVQKNSLNSRERTLHIEAYNETFSNRVIINEHCCYTVHPENEDWTCFEQSASLDIKSFFGFESTVEKIAMKQYTSNIKKGKEIIEYYLRQLEEEGITFVPRWSPPSITTSSETSSSSSKKQAASMAVVIPEAALKEGLSGDALSSPSAPEPVVGTPDDKLDADYIKRYLGDLTPLQESCLIRLRQWLQETHKGKIPKDEHILRFLRARDFNIDKAREIMCQSLTWRKQHQVDYILETWTPPQVLQDYYAGGWHHHDKDGRPLYVLRLGQMDTKGLVRALGEEALLRYVLSINEEGLRRCEENTKVFGRPISSWTCLVDLEGLNMRHLWRPGVKALLRIIEVVEANYPETLGRLLILRAPRVFPVLWTLVSPFIDDNTRRKFLIYAGNDYQGPGGLLDYIDKEIIPDFLSGECMCEVPEGGLVPKSLYRTAEELENEDLKLWTETIYQSASVFKGAPHEILIQIVDASSVITWDFDVCKGDIVFNIYHSKRSPQPPKKDSLGAHSITSPGGNNVQLIDKVWQLGRDYSMVESPLICKEGESVQGSHVTRWPGFYILQWKFHSMPACAASSLPRVDDVLASLQVSSHKCKVMYYTEVIGSEDFRGSMTSLESSHSGFSQLSAATTSSSQSHSSSMISR.

The PRELI/MSF1 domain occupies 1–175 (MVQKYQSPVR…YLRQLEEEGI (175 aa)). The interval 1–510 (MVQKYQSPVR…VPKSLYRTAE (510 aa)) is required for interaction and inhibitory function toward RIGI. Thr-234 carries the post-translational modification Phosphothreonine. Positions 319–495 (PPQVLQDYYA…FLSGECMCEV (177 aa)) constitute a CRAL-TRIO domain. A GOLD domain is found at 521 to 674 (TETIYQSASV…KCKVMYYTEV (154 aa)). Ser-586 bears the Phosphoserine mark.

Interacts with RIGI (via tandem CARD domain); the interaction is direct. Interacts (via GOLD domain) with SLC18A3; the interaction is direct. Interacts with SLC5A7 (via GOLD domain); the interaction is direct. Ubiquitous.

Its subcellular location is the cytoplasm. It localises to the golgi apparatus. May play a role in innate immunity by inhibiting the antiviral RIG-I signaling pathway. In this pathway, functions as a negative regulator of RIGI, the cytoplasmic sensor of viral nucleic acids. Prevents the interaction of RIGI with MAVS/IPS1, an important step in signal propagation. May also regulate the SLC18A3 and SLC5A7 cholinergic transporters. The chain is SEC14-like protein 1 (SEC14L1) from Homo sapiens (Human).